Here is a 480-residue protein sequence, read N- to C-terminus: Glycerol-3-phosphate transporter (480 aa).

At 1 to 36 the chain is on the cytoplasmic side; the sequence is MFGPFKPAPHIAELPAEKIDSTYKRLRWQVFAGIFF. The helical transmembrane segment at 37–57 threads the bilayer; that stretch reads GYAAYYFVRANFDLAQPGLIQ. At 58-64 the chain is on the periplasmic side; sequence AGLYSKA. A helical transmembrane segment spans residues 65 to 85; sequence ELGVIGSAAGLAYGLSKFVMA. Residues 86-94 are Cytoplasmic-facing; the sequence is GMSDRSNPR. A helical transmembrane segment spans residues 95-113; sequence VFLPFGLLLSGLCMTLMGL. Over 114-121 the chain is Periplasmic; that stretch reads FPWATSGI. A helical transmembrane segment spans residues 122–142; sequence AIMWVMIFLNGWFQGMGWPPC. The Cytoplasmic segment spans residues 143-161; sequence GRTMVHWWSKSERGTIVSI. A helical membrane pass occupies residues 162 to 181; that stretch reads WNTAHNIGGMVPGAMVLLAS. The Periplasmic portion of the chain corresponds to 182 to 201; sequence AIFFSTHGIEAQAKDVWQQS. Residues 202–219 traverse the membrane as a helical segment; the sequence is LYFPGIAAMIFAIPVYFV. The Cytoplasmic portion of the chain corresponds to 220–274; that stretch reads MRDTPQSCGLPSIEKWRNDYPDDYNEKTYENDLTAKEIFVTYVLKNKLLWYIAIA. Residues 275–295 traverse the membrane as a helical segment; the sequence is NVFVYLIRYGVLKWSPVYLSE. Residues 296–300 lie on the Periplasmic side of the membrane; sequence VKHFN. A helical transmembrane segment spans residues 301–321; that stretch reads IKGTAWAYTIYELAAVPGTLL. At 322 to 334 the chain is on the cytoplasmic side; that stretch reads CGWVSDKVFKGKR. Residues 335-354 form a helical membrane-spanning segment; the sequence is GLTGFIFMILTTAAVVAYWM. Residues 355-359 lie on the Periplasmic side of the membrane; that stretch reads NPATP. Residues 360–396 traverse the membrane as a helical segment; that stretch reads EAELANYSAWYENPYQLTDFVLMTLIGFLIYGPVMLI. Residues 397 to 415 lie on the Cytoplasmic side of the membrane; that stretch reads GLHALELAPKKAAGTAAGF. A helical membrane pass occupies residues 416 to 437; sequence TGLFGYLGGTVSASAVIGWAAQ. At 438–442 the chain is on the periplasmic side; that stretch reads HYGWD. A helical membrane pass occupies residues 443 to 463; the sequence is GGFYVMIGGGVLAVLLLLIVM. Over 464 to 479 the chain is Cytoplasmic; sequence VEEGKHKAKLGDTYGT.

Belongs to the major facilitator superfamily. Organophosphate:Pi antiporter (OPA) (TC 2.A.1.4) family.

It localises to the cell inner membrane. In terms of biological role, responsible for glycerol-3-phosphate uptake. This is Glycerol-3-phosphate transporter (glpT) from Haemophilus influenzae (strain ATCC 51907 / DSM 11121 / KW20 / Rd).